The sequence spans 304 residues: UDP-N-acetylenolpyruvoylglucosamine reductase (304 aa).

The FAD-binding PCMH-type domain maps to 33–198 (RVGGPVDILL…ITATFCFESG (166 aa)). Residue arginine 177 is part of the active site. The active-site Proton donor is serine 227. Glutamate 297 is an active-site residue.

This sequence belongs to the MurB family. The cofactor is FAD.

It localises to the cytoplasm. The catalysed reaction is UDP-N-acetyl-alpha-D-muramate + NADP(+) = UDP-N-acetyl-3-O-(1-carboxyvinyl)-alpha-D-glucosamine + NADPH + H(+). It functions in the pathway cell wall biogenesis; peptidoglycan biosynthesis. In terms of biological role, cell wall formation. In Clostridium botulinum (strain Eklund 17B / Type B), this protein is UDP-N-acetylenolpyruvoylglucosamine reductase.